Here is a 103-residue protein sequence, read N- to C-terminus: Small ribosomal subunit protein uS10 (103 aa).

Belongs to the universal ribosomal protein uS10 family. In terms of assembly, part of the 30S ribosomal subunit.

Involved in the binding of tRNA to the ribosomes. In Shewanella halifaxensis (strain HAW-EB4), this protein is Small ribosomal subunit protein uS10.